The chain runs to 491 residues: Putative diacyglycerol O-acyltransferase MT2557 (491 aa).

Catalysis depends on His145, which acts as the Proton acceptor.

This sequence belongs to the long-chain O-acyltransferase family.

It catalyses the reaction an acyl-CoA + a 1,2-diacyl-sn-glycerol = a triacyl-sn-glycerol + CoA. It participates in glycerolipid metabolism; triacylglycerol biosynthesis. This chain is Putative diacyglycerol O-acyltransferase MT2557, found in Mycobacterium tuberculosis (strain CDC 1551 / Oshkosh).